A 956-amino-acid polypeptide reads, in one-letter code: ATPase 11, plasma membrane-type (956 aa).

The Cytoplasmic segment spans residues 1-65 (MGDKEEVLEA…EKKESKFLKF (65 aa)). A helical transmembrane segment spans residues 66 to 85 (LGFMWNPLSWVMEAAAIMAI). Residues 86-97 (ALANGGGKPPDW) lie on the Extracellular side of the membrane. A helical membrane pass occupies residues 98 to 118 (QDFVGIITLLVINSTISFIEE). At 119-247 (NNAGNAAAAL…GHFQQVLTAI (129 aa)) the chain is on the cytoplasmic side. Residues 248–268 (GNFCICSIAVGMIIEIVVMYP) form a helical membrane-spanning segment. The Extracellular portion of the chain corresponds to 269 to 277 (IQHRAYRPG). Residues 278 to 295 (IDNLLVLLIGGIPIAMPT) form a helical membrane-spanning segment. Over 296 to 647 (VLSVTMAIGS…TSRAIFQRMK (352 aa)) the chain is Cytoplasmic. Catalysis depends on D333, which acts as the 4-aspartylphosphate intermediate. Mg(2+) is bound by residues D592 and D596. The helical transmembrane segment at 648–669 (NYTIYAVSITIRIVLGFMLLAL) threads the bilayer. Over 670-674 (IWKFD) the chain is Extracellular. A helical transmembrane segment spans residues 675-697 (FPPFMVLIIAILNDGTIMTISKD). Over 698–713 (RVKPSPLPDSWKLSEI) the chain is Cytoplasmic. The helical transmembrane segment at 714 to 734 (FATGVVFGSYMAMMTVIFFWA) threads the bilayer. At 735–759 (AYKTDFFPRTFGVSTLEKTAHDDFR) the chain is on the extracellular side. Residues 760–780 (KLASAIYLQVSIISQALIFVT) traverse the membrane as a helical segment. The Cytoplasmic segment spans residues 781-792 (RSRSWSYVERPG). A helical membrane pass occupies residues 793-813 (MLLVVAFILAQLVATLIAVYA). The Extracellular segment spans residues 814–821 (NWSFAAIE). The helical transmembrane segment at 822–842 (GIGWGWAGVIWLYNIVFYIPL) threads the bilayer. Residues 843-956 (DIIKFLIRYA…IETIQQAYTV (114 aa)) lie on the Cytoplasmic side of the membrane. A Phosphothreonine modification is found at T889. At S938 the chain carries Phosphoserine. The segment at 954–956 (YTV) is interaction with 14-3-3 proteins. Phosphothreonine is present on T955.

It belongs to the cation transport ATPase (P-type) (TC 3.A.3) family. Type IIIA subfamily. As to quaternary structure, binds to 14-3-3 proteins. The binding is induced by phosphorylation of Thr-955. Binding to 14-3-3 proteins activates the H(+)-ATPase. As to expression, expressed in guard cells, mesophyll cells, leaves and roots.

The protein resides in the membrane. The enzyme catalyses ATP + H2O + H(+)(in) = ADP + phosphate + 2 H(+)(out). In terms of biological role, the plasma membrane H(+) ATPase of plants and fungi generates a proton gradient that drives the active transport of nutrients by H(+)-symport. The resulting external acidification and/or internal alkinization may mediate growth responses. The sequence is that of ATPase 11, plasma membrane-type (AHA11) from Arabidopsis thaliana (Mouse-ear cress).